Consider the following 262-residue polypeptide: Ribosomal RNA small subunit methyltransferase A (262 aa).

S-adenosyl-L-methionine is bound by residues His19, Leu21, Gly44, Glu65, Asp90, and Asn109. The disordered stretch occupies residues 218-246 (LPNNLPGPLRERAEEALAGLGHGPDARAE).

This sequence belongs to the class I-like SAM-binding methyltransferase superfamily. rRNA adenine N(6)-methyltransferase family. RsmA subfamily.

The protein resides in the cytoplasm. The enzyme catalyses adenosine(1518)/adenosine(1519) in 16S rRNA + 4 S-adenosyl-L-methionine = N(6)-dimethyladenosine(1518)/N(6)-dimethyladenosine(1519) in 16S rRNA + 4 S-adenosyl-L-homocysteine + 4 H(+). Its function is as follows. Specifically dimethylates two adjacent adenosines (A1518 and A1519) in the loop of a conserved hairpin near the 3'-end of 16S rRNA in the 30S particle. May play a critical role in biogenesis of 30S subunits. This Rubrobacter xylanophilus (strain DSM 9941 / JCM 11954 / NBRC 16129 / PRD-1) protein is Ribosomal RNA small subunit methyltransferase A.